The following is a 319-amino-acid chain: tRNA-cytidine(32) 2-sulfurtransferase (319 aa).

The short motif at 43–48 is the PP-loop motif element; sequence SGGKDS. [4Fe-4S] cluster contacts are provided by Cys-118, Cys-121, and Cys-209.

It belongs to the TtcA family. In terms of assembly, homodimer. Requires Mg(2+) as cofactor. [4Fe-4S] cluster is required as a cofactor.

It localises to the cytoplasm. The catalysed reaction is cytidine(32) in tRNA + S-sulfanyl-L-cysteinyl-[cysteine desulfurase] + AH2 + ATP = 2-thiocytidine(32) in tRNA + L-cysteinyl-[cysteine desulfurase] + A + AMP + diphosphate + H(+). The protein operates within tRNA modification. Its function is as follows. Catalyzes the ATP-dependent 2-thiolation of cytidine in position 32 of tRNA, to form 2-thiocytidine (s(2)C32). The sulfur atoms are provided by the cysteine/cysteine desulfurase (IscS) system. This is tRNA-cytidine(32) 2-sulfurtransferase from Neisseria meningitidis serogroup A / serotype 4A (strain DSM 15465 / Z2491).